The chain runs to 337 residues: Ornithine carbamoyltransferase (337 aa).

Carbamoyl phosphate contacts are provided by residues 56-59, Gln-83, Arg-107, and 134-137; these read STRT and HPTQ. Residues Asn-168, Asp-232, and 236-237 each bind L-ornithine; that span reads SM. Residues 274–275 and Arg-320 contribute to the carbamoyl phosphate site; that span reads CL.

Belongs to the aspartate/ornithine carbamoyltransferase superfamily. OTCase family.

The protein resides in the cytoplasm. The catalysed reaction is carbamoyl phosphate + L-ornithine = L-citrulline + phosphate + H(+). The protein operates within amino-acid biosynthesis; L-arginine biosynthesis; L-arginine from L-ornithine and carbamoyl phosphate: step 1/3. In terms of biological role, reversibly catalyzes the transfer of the carbamoyl group from carbamoyl phosphate (CP) to the N(epsilon) atom of ornithine (ORN) to produce L-citrulline. This is Ornithine carbamoyltransferase (argI) from Shigella flexneri.